A 239-amino-acid polypeptide reads, in one-letter code: Large ribosomal subunit protein uL2 (239 aa).

It belongs to the universal ribosomal protein uL2 family.

Its subcellular location is the cytoplasm. The polypeptide is Large ribosomal subunit protein uL2 (RPL8) (Encephalitozoon cuniculi (strain GB-M1) (Microsporidian parasite)).